The chain runs to 315 residues: Iron(3+)-hydroxamate-binding protein FhuD (315 aa).

The N-terminal stretch at 1-23 (MTHIYKKLGAAFFALLLIAALAA) is a signal peptide. Cys24 is lipidated: N-palmitoyl cysteine. Cys24 carries S-diacylglycerol cysteine lipidation. Residues 60-315 (RVVVMADGYY…LEFITESLTK (256 aa)) form the Fe/B12 periplasmic-binding domain.

The protein belongs to the bacterial solute-binding protein 8 family. As to quaternary structure, the complex is composed of an ATP-binding protein (FhuC), two transmembrane proteins (FhuB and FhuG) and a solute-binding protein (FhuD or YxeB).

It is found in the cell membrane. It localises to the membrane raft. Functionally, part of the ABC transporter complex FhuCBGD involved in iron(3+)-hydroxamate import. Binds the iron(3+)-hydroxamate complex and transfers it to the membrane-bound permease. Required for the transport of ferrichrome and coprogen. The protein is Iron(3+)-hydroxamate-binding protein FhuD (fhuD) of Bacillus subtilis (strain 168).